A 280-amino-acid chain; its full sequence is Inner membrane ABC transporter permease protein YcjP (280 aa).

The Cytoplasmic segment spans residues Met-1–Arg-10. Residues Ile-11–Met-31 traverse the membrane as a helical segment. The Periplasmic portion of the chain corresponds to Leu-32–Gln-53. Residues Trp-54–Phe-74 traverse the membrane as a helical segment. The 192-residue stretch at Phe-74 to Ser-265 folds into the ABC transmembrane type-1 domain. Over Arg-75–Ser-77 the chain is Cytoplasmic. Residues Leu-78 to Ala-98 form a helical membrane-spanning segment. Over Leu-99–Val-117 the chain is Periplasmic. The helical transmembrane segment at Tyr-118–Ile-138 threads the bilayer. Over Tyr-139–Asp-140 the chain is Cytoplasmic. A helical transmembrane segment spans residues Thr-141–Leu-161. Residues Lys-162 to Arg-189 are Periplasmic-facing. A helical transmembrane segment spans residues Ile-190–Ala-210. The Cytoplasmic segment spans residues Trp-211–Tyr-214. Residues Leu-215 to Ala-235 traverse the membrane as a helical segment. Topologically, residues Leu-236–Tyr-242 are periplasmic. A helical transmembrane segment spans residues Ile-243 to Ala-263. The Cytoplasmic segment spans residues Leu-264–Gly-280.

It belongs to the binding-protein-dependent transport system permease family. MalFG subfamily.

The protein localises to the cell inner membrane. Probably part of the binding-protein-dependent transport system YcjNOP. Probably responsible for the translocation of the substrate across the membrane. This is Inner membrane ABC transporter permease protein YcjP (ycjP) from Escherichia coli (strain K12).